The following is a 152-amino-acid chain: Peptide deformylase (152 aa).

Cys-91 and His-133 together coordinate Fe cation. The active site involves Glu-134. His-137 is a binding site for Fe cation.

The protein belongs to the polypeptide deformylase family. Requires Fe(2+) as cofactor.

It catalyses the reaction N-terminal N-formyl-L-methionyl-[peptide] + H2O = N-terminal L-methionyl-[peptide] + formate. Its function is as follows. Removes the formyl group from the N-terminal Met of newly synthesized proteins. Requires at least a dipeptide for an efficient rate of reaction. N-terminal L-methionine is a prerequisite for activity but the enzyme has broad specificity at other positions. The chain is Peptide deformylase from Wigglesworthia glossinidia brevipalpis.